We begin with the raw amino-acid sequence, 49 residues long: Small ribosomal subunit protein eS31 (49 aa).

Positions 21, 24, 39, and 42 each coordinate Zn(2+). The C4-type zinc finger occupies Cys-21 to Cys-42.

Belongs to the eukaryotic ribosomal protein eS31 family. As to quaternary structure, part of the 30S ribosomal subunit. It depends on Zn(2+) as a cofactor.

The polypeptide is Small ribosomal subunit protein eS31 (Methanosarcina mazei (strain ATCC BAA-159 / DSM 3647 / Goe1 / Go1 / JCM 11833 / OCM 88) (Methanosarcina frisia)).